The sequence spans 144 residues: Large ribosomal subunit protein uL16 (144 aa).

The protein belongs to the universal ribosomal protein uL16 family. In terms of assembly, part of the 50S ribosomal subunit.

Functionally, binds 23S rRNA and is also seen to make contacts with the A and possibly P site tRNAs. The polypeptide is Large ribosomal subunit protein uL16 (Lacticaseibacillus paracasei (strain ATCC 334 / BCRC 17002 / CCUG 31169 / CIP 107868 / KCTC 3260 / NRRL B-441) (Lactobacillus paracasei)).